A 153-amino-acid chain; its full sequence is Aminoglycoside N(6')-acetyltransferase type 1 (153 aa).

Residues 6 to 153 (PTIRQATPAD…YFRMPLEPSA (148 aa)) form the N-acetyltransferase domain. Substrate-binding residues include Trp-27, Tyr-70, Glu-83, Asp-119, and Glu-140.

Homodimer.

It carries out the reaction kanamycin B + acetyl-CoA = N(6')-acetylkanamycin B + CoA + H(+). In terms of biological role, catalyzes the transfer of an acetyl group from acetyl-CoA to the 6'-amino group of aminoglycoside molecules conferring resistance to antibiotics containing the purpurosamine ring including amikacin, gentamicin, kanamycin B, tobramycin, netilmicin, and isepamicin. This is Aminoglycoside N(6')-acetyltransferase type 1 from Stenotrophomonas maltophilia (Pseudomonas maltophilia).